Consider the following 1004-residue polypeptide: Polyhomeotic-like protein 1 (1004 aa).

The span at 1 to 22 (METESEQNSNSTNGSSSSGGSS) shows a compositional bias: low complexity. 6 disordered regions span residues 1–24 (METESEQNSNSTNGSSSSGGSSRP), 212–241 (NQQASAQGPQMQGSTQKAIPPGASPVSSLS), 261–355 (SLNL…NLTR), 432–512 (QQQQ…QLGA), 556–589 (RGMPGTVQSGQAHLASSPPSSQAPGALQECPPTL), and 636–672 (TLAVKRKADSEEERDDVSTLGSMLPAKASPVAESPKV). A compositionally biased stretch (polar residues) spans 212 to 228 (NQQASAQGPQMQGSTQK). Over residues 279 to 303 (MGPGGGGQAHGGLGQLPSSGMGGGS) the composition is skewed to gly residues. Polar residues-rich tracts occupy residues 319–329 (QTVTVSQGSQT) and 344–355 (SGQQNVGMNLTR). Residues 432-447 (QQQQQQQQPQATTLTA) show a composition bias toward low complexity. Pro residues predominate over residues 448–458 (PQPPQVPPTQQ). The segment covering 459 to 482 (VPPSQSQQQAQTLVVQPMLQSSPL) has biased composition (low complexity). Over residues 483–495 (SLPPDAAPKPPIP) the composition is skewed to pro residues. Positions 566–583 (QAHLASSPPSSQAPGALQ) are enriched in low complexity. S645 is modified (phosphoserine). A Glycyl lysine isopeptide (Lys-Gly) (interchain with G-Cter in SUMO2) cross-link involves residue K763. An FCS-type zinc finger spans residues 791-825 (LDKKANLLKCEYCGKYAPAEQFRGSKRFCSMTCAK). Zn(2+) is bound by residues C800, C803, C819, and C823. Positions 848–928 (ANYARVRRRG…APPTPELHGI (81 aa)) are disordered. The residue at position 898 (S898) is a Phosphoserine. T922 carries the phosphothreonine modification. Positions 940–1004 (WSVEEVYEFI…CAKINVLKET (65 aa)) constitute an SAM domain.

Homodimer. Component of a PRC1-like complex. Interacts with RNF2 and CBX7. Interacts with PHC2, PHC2 and BMI1.

The protein resides in the nucleus. In terms of biological role, component of a Polycomb group (PcG) multiprotein PRC1-like complex, a complex class required to maintain the transcriptionally repressive state of many genes, including Hox genes, throughout development. PcG PRC1 complex acts via chromatin remodeling and modification of histones; it mediates monoubiquitination of histone H2A 'Lys-119', rendering chromatin heritably changed in its expressibility. Required for proper control of cellular levels of GMNN expression. The polypeptide is Polyhomeotic-like protein 1 (PHC1) (Homo sapiens (Human)).